Consider the following 345-residue polypeptide: AP2-like ethylene-responsive transcription factor At1g16060 (345 aa).

The interval 15-62 is disordered; the sequence is TRQSKKTSVENETGDDQSATSVVLKAKRKRRSQPRDAPPQRSSVHRGV. 2 DNA-binding regions (AP2/ERF) span residues 58-124 and 160-218; these read VHRG…LNFP and KYRG…TNFD. The segment at 243–302 is disordered; sequence HSDLSPFIKPNHESDLSQSQSSSEDNDDRKTKLLKSSPLVAEEVIGPSTPPEIAPPRRSF.

It belongs to the AP2/ERF transcription factor family. AP2 subfamily.

Its subcellular location is the nucleus. Probably acts as a transcriptional activator. Binds to the GCC-box pathogenesis-related promoter element. May be involved in the regulation of gene expression by stress factors and by components of stress signal transduction pathways. The protein is AP2-like ethylene-responsive transcription factor At1g16060 of Arabidopsis thaliana (Mouse-ear cress).